Here is a 285-residue protein sequence, read N- to C-terminus: Urease accessory protein UreD (285 aa).

Belongs to the UreD family. As to quaternary structure, ureD, UreF and UreG form a complex that acts as a GTP-hydrolysis-dependent molecular chaperone, activating the urease apoprotein by helping to assemble the nickel containing metallocenter of UreC. The UreE protein probably delivers the nickel.

Its subcellular location is the cytoplasm. Functionally, required for maturation of urease via the functional incorporation of the urease nickel metallocenter. The sequence is that of Urease accessory protein UreD from Cytophaga hutchinsonii (strain ATCC 33406 / DSM 1761 / CIP 103989 / NBRC 15051 / NCIMB 9469 / D465).